The following is a 572-amino-acid chain: Squalene monooxygenase (572 aa).

The Cytoplasmic portion of the chain corresponds to 1–19; it reads MWTFLGIATFTYFYKKCGD. An interaction with MARCHF6 region spans residues 1–98; sequence MWTFLGIATF…EQLESKKCRK (98 aa). The stretch at 20-40 is an intramembrane region; the sequence is VTLANKELLLCVLVFLSLGLV. The Cytoplasmic segment spans residues 41–572; it reads LSYRCRHRHG…IYSEMKYLVH (532 aa). A required for degradation in response to high membrane cholesterol levels region spans residues 61-72; sequence QFAAFSDILSAL. Residues 116–572 are sufficient for enzyme activity; the sequence is TSFVTDPEVI…IYSEMKYLVH (457 aa). FAD is bound by residues 131–132, 151–152, arginine 159, arginine 232, valine 248, aspartate 406, and methionine 419; these read VL and ER. Residues 514 to 572 are hydrophobic; mediates interaction with membranes; sequence PLVLIRHFFSVAIYATYFCFKSEPWATKPRALFSSGAVLYKACSILFPLIYSEMKYLVH.

The protein belongs to the squalene monooxygenase family. Interacts (via N-terminal domain) with MARCHF6. Interacts with SMIM22; this interaction modulates lipid droplet formation. Requires FAD as cofactor. Ubiquitinated by MARCHF6 in response to high cholesterol levels in intracellular membranes, leading to proteasomal degradation. Detected in liver.

Its subcellular location is the microsome membrane. It is found in the endoplasmic reticulum membrane. The enzyme catalyses squalene + reduced [NADPH--hemoprotein reductase] + O2 = (S)-2,3-epoxysqualene + oxidized [NADPH--hemoprotein reductase] + H2O + H(+). It functions in the pathway terpene metabolism; lanosterol biosynthesis; lanosterol from farnesyl diphosphate: step 2/3. Catalyzes the stereospecific oxidation of squalene to (S)-2,3-epoxysqualene, and is considered to be a rate-limiting enzyme in steroid biosynthesis. This is Squalene monooxygenase (Sqle) from Mus musculus (Mouse).